Consider the following 215-residue polypeptide: NADH-quinone oxidoreductase subunit C (215 aa).

This sequence belongs to the complex I 30 kDa subunit family. As to quaternary structure, NDH-1 is composed of 14 different subunits. Subunits NuoB, C, D, E, F, and G constitute the peripheral sector of the complex.

Its subcellular location is the cell inner membrane. It carries out the reaction a quinone + NADH + 5 H(+)(in) = a quinol + NAD(+) + 4 H(+)(out). Its function is as follows. NDH-1 shuttles electrons from NADH, via FMN and iron-sulfur (Fe-S) centers, to quinones in the respiratory chain. The immediate electron acceptor for the enzyme in this species is believed to be ubiquinone. Couples the redox reaction to proton translocation (for every two electrons transferred, four hydrogen ions are translocated across the cytoplasmic membrane), and thus conserves the redox energy in a proton gradient. The protein is NADH-quinone oxidoreductase subunit C of Bordetella parapertussis (strain 12822 / ATCC BAA-587 / NCTC 13253).